The chain runs to 83 residues: uncharacterized protein (83 aa).

The chain crosses the membrane as a helical span at residues 50-70; sequence IMVFLGEAWIILIPFAIFCII.

The protein belongs to the plectrovirus ORF7 family.

It is found in the host membrane. This is an uncharacterized protein from Spiroplasma citri (SpV1).